The following is a 118-amino-acid chain: uncharacterized protein (118 aa).

The next 2 membrane-spanning stretches (helical) occupy residues 7-27 and 34-58; these read VIVKCEFFCIFTFIFGCFIIE and VFVACCTIIKMGRCNMCIFITAIIF.

It localises to the membrane. This is an uncharacterized protein from Saccharomyces cerevisiae (strain ATCC 204508 / S288c) (Baker's yeast).